A 101-amino-acid polypeptide reads, in one-letter code: Parathymosin (101 aa).

The interval M1–A101 is disordered. S2 carries the post-translational modification N-acetylserine. S2 carries the phosphoserine modification. Residue K4 is modified to N6-acetyllysine. 2 positions are modified to phosphoserine: S5 and S13. A compositionally biased stretch (basic and acidic residues) spans S13 to V37. An N6-acetyllysine modification is found at K15. Positions V38–E74 are enriched in acidic residues. The residue at position 52 (T52) is a Phosphothreonine. Position 91 is an N6-acetyllysine (K91).

It belongs to the pro/parathymosin family.

In terms of biological role, parathymosin may mediate immune function by blocking the effect of prothymosin alpha which confers resistance to certain opportunistic infections. The polypeptide is Parathymosin (Ptms) (Mus musculus (Mouse)).